A 229-amino-acid chain; its full sequence is Ras-related protein rab-39 (229 aa).

73-77 (DTAGQ) contributes to the GTP binding site. Residues Cys-227 and Cys-229 are each lipidated (S-geranylgeranyl cysteine). Cys-229 is modified (cysteine methyl ester).

It belongs to the small GTPase superfamily. Rab family. In terms of assembly, interacts (in GTP-bound form) with Ras association domain-containing protein rsf-1.

It is found in the cell membrane. It localises to the cytoplasmic vesicle membrane. The protein resides in the golgi apparatus. Functionally, small GTPases Rab involved in autophagy. The small GTPases Rab are key regulators of intracellular membrane trafficking, from the formation of transport vesicles to their fusion with membranes. Rabs cycle between an inactive GDP-bound form and an active GTP-bound form that is able to recruit to membranes different sets of downstream effectors directly responsible for vesicle formation, movement, tethering and fusion. Involved in positively regulating the oxidative stress response, perhaps in concert with the Ras association domain-containing protein rsf-1. This Caenorhabditis elegans protein is Ras-related protein rab-39.